A 974-amino-acid chain; its full sequence is Short transient receptor potential channel 4 (974 aa).

Residues 1-324 (MAQFYYKRNV…YDEFPGWRRR (324 aa)) lie on the Cytoplasmic side of the membrane. 4 ANK repeats span residues 29–60 (LSPSEKAYLNAVEKGDYASVKKSLEEAEIYFK), 71–93 (RTALLIAIENENLELIELLLSFN), 96–118 (VGDALLHAIRKEVVGAVELLLNH), and 141–165 (PDITPIILAAHTNNYEIIKLLVQKG). The multimerization domain stretch occupies residues 87–172 (ELLLSFNVYV…QKGVSVPRPH (86 aa)). Residues H172, C176, C178, and C181 each contribute to the Zn(2+) site. A coiled-coil region spans residues 223-260 (LSWELQELSKVENEFKSEYEELSRQCKQFAKDLLDQTR). The multimerization domain stretch occupies residues 254–304 (DLLDQTRSSRELEIILNYRDDNSLIEEQSGNDLARLKLAIKYRQKEFVAQP). The segment at residues 325 to 359 (HWAVKMVTCFIIGLLFPVFSVCYLIAPKSPLGLFI) is an intramembrane region (discontinuously helical). Over 360–362 (RKP) the chain is Cytoplasmic. A helical transmembrane segment spans residues 363-383 (FIKFICHTASYLTFLFLLLLA). Residues 384 to 403 (SQHIDRSDLNRQGPPPTIVE) are Extracellular-facing. A helical transmembrane segment spans residues 404–418 (WMILPWVLGFIWGEI). Ca(2+) is bound by residues E417, Q420, N435, and D438. Residues 419–432 (KQMWDGGLQDYIHD) are Cytoplasmic-facing. The chain crosses the membrane as a helical span at residues 433–453 (WWNLMDFVMNSLYLATISLKI). The Extracellular segment spans residues 454–475 (VAFVKYSALNPRESWDMWHPTL). The chain crosses the membrane as a helical span at residues 476–498 (VAEALFAIANIFSSLRLISLFTA). The Cytoplasmic segment spans residues 499-511 (NSHLGPLQISLGR). A helical membrane pass occupies residues 512–534 (MLLDILKFLFIYCLVLLAFANGL). At 535–599 (NQLYFYYEET…HEFTEFVGAT (65 aa)) the chain is on the extracellular side. A disulfide bridge links C549 with C554. Residues 600–620 (MFGTYNVISLVVLLNMLIAMM) form a helical membrane-spanning segment. The interaction with ITPR1, ITPR2 and ITPR3 stretch occupies residues 615 to 974 (MLIAMMNNSY…AHEDYVTTRL (360 aa)). The Cytoplasmic portion of the chain corresponds to 621-974 (NNSYQLIADH…AHEDYVTTRL (354 aa)). A disordered region spans residues 765–787 (ANAASSADSDEKSQSEGNGKDKR). The segment covering 773-784 (SDEKSQSEGNGK) has biased composition (basic and acidic residues). 2 positions are modified to phosphotyrosine; by FYN: Y956 and Y969. A PDZ-binding domain region spans residues 972 to 974 (TRL).

It belongs to the transient receptor (TC 1.A.4) family. STrpC subfamily. TRPC4 sub-subfamily. As to quaternary structure, homotetramer. Heterotetramer with TRPC1 and/or TRPC5. Forms a heteromeric ion channel with TRPC1, with a 1:3 TRPC1:TRPC4 stoichiometry. Interacts with TRPC4AP. Isoform alpha but not isoform beta interacts with ITPR1, ITPR2 and ITPR3. Interacts with NHERF1. Interacts with MX1 and RNF24. Interacts (via CIRB domain) with SESTD1 (via the spectrin 1 repeat) and SPTBN5 (via C-terminus). Interacts with CDH5 and CTNNB1. Interacts (via protein 4.1-binding domain) with EPB41L2. Interacts with PLSCR1. In terms of tissue distribution, abundantly expressed in brain (hippocampal CA1 pyramidal neurons, dentate gyrus granule cells, and cerebral cortical neurons, and in the septal nuclei and the mitral layer of olfactory bulb). Lower levels are detected in other tissues.

Its subcellular location is the cell membrane. It carries out the reaction Ca(2+)(in) = Ca(2+)(out). It catalyses the reaction Na(+)(in) = Na(+)(out). The enzyme catalyses Li(+)(in) = Li(+)(out). The catalysed reaction is Cs(+)(in) = Cs(+)(out). With respect to regulation, may be operated by a phosphatidylinositol second messenger system activated by receptor tyrosine kinases or G-protein coupled receptors. May be activated by intracellular calcium store depletion. Its function is as follows. Forms a receptor-activated non-selective calcium permeant cation channel. Acts as a cell-cell contact-dependent endothelial calcium entry channel. Forms a homomeric ion channel or a heteromeric ion channel with TRPC1; the heteromeric ion channel has reduced calcium permeability compared to the homomeric channel. Also permeable to monovalent ions including sodium, lithium and cesium ions. This chain is Short transient receptor potential channel 4 (Trpc4), found in Mus musculus (Mouse).